Consider the following 244-residue polypeptide: Large ribosomal subunit protein uL30 (244 aa).

Positions 1–37 (MAPTKKVPQVPETVLKRRKQRADARTKAAQHKVTVAA) are disordered.

It belongs to the universal ribosomal protein uL30 family.

Its function is as follows. Binds to G-rich structures in 28S rRNA and in mRNAs. Plays a regulatory role in the translation apparatus; inhibits cell-free translation of mRNAs. The protein is Large ribosomal subunit protein uL30 (rpl-7) of Caenorhabditis elegans.